Here is a 200-residue protein sequence, read N- to C-terminus: Nitrile hydratase subunit alpha (200 aa).

Positions 105, 108, 109, and 110 each coordinate Fe(3+). Cysteine 108 carries the post-translational modification Cysteine sulfinic acid (-SO2H). A Cysteine sulfenic acid (-SOH) modification is found at cysteine 110.

The protein belongs to the nitrile hydratase subunit alpha family. Heterodimer of an alpha and a beta chain. Fe(3+) is required as a cofactor. Post-translationally, oxidation on Cys-108 is essential for the activity. Oxidation on Cys-110 stabilizes the Fe-NO ligand coordinated in the inactive form.

It carries out the reaction an aliphatic primary amide = an aliphatic nitrile + H2O. Its activity is regulated as follows. Inactivated by oxidation of Cys-110 to a sulfenic acid. Its function is as follows. NHase catalyzes the hydration of various nitrile compounds to the corresponding amides. Industrial production of acrylamide is now being developed using some of the enzymes of this class. The polypeptide is Nitrile hydratase subunit alpha (nthA) (Pseudomonas chlororaphis (Pseudomonas aureofaciens)).